The sequence spans 1192 residues: DNA topoisomerase 2 (1192 aa).

ATP-binding positions include asparagine 64, asparagine 95, and 142 to 149; that span reads GTNGVGLK. Mg(2+) is bound by residues glutamate 438, aspartate 539, and aspartate 541. Residues 707–1174 form the Topo IIA-type catalytic domain; the sequence is IPNFLDGMTR…PGASVWLEEI (468 aa). Tyrosine 800 functions as the O-(5'-phospho-DNA)-tyrosine intermediate in the catalytic mechanism.

It belongs to the type II topoisomerase family. It depends on Mg(2+) as a cofactor. Mn(2+) is required as a cofactor. Requires Ca(2+) as cofactor.

Its subcellular location is the host cytoplasm. It catalyses the reaction ATP-dependent breakage, passage and rejoining of double-stranded DNA.. Type II topoisomerase. Processively relaxes supercoiled DNA. Displays DNA-supercoiling activity only when associated with the viral histone-like protein. The sequence is that of DNA topoisomerase 2 from Ornithodoros (relapsing fever ticks).